The sequence spans 225 residues: MNSIKFPVLDRTTKNSVISTTLNDLSNWSRLSSLWPFLYGTSCCFIEFASLIGSRFDFDRYGLVPRSSPRQADLILTAGTVTMKMAPSLVRLYEQMPEPKYVIAMGACTITGGMFSTDSYSTVRGVDKLIPVDVYLPGCPPKPEAVIDAITKLRKKIAREIYTDRIRPQQGNRCFTTNHKFFVVRSTHTGNSDQQLLYPPPSTSEISTETFFKYKSPVSSHELVN.

4 residues coordinate [4Fe-4S] cluster: cysteine 43, cysteine 44, cysteine 108, and cysteine 139.

Belongs to the complex I 20 kDa subunit family. As to quaternary structure, NDH is composed of at least 16 different subunits, 5 of which are encoded in the nucleus. The cofactor is [4Fe-4S] cluster.

The protein localises to the plastid. It localises to the chloroplast thylakoid membrane. It catalyses the reaction a plastoquinone + NADH + (n+1) H(+)(in) = a plastoquinol + NAD(+) + n H(+)(out). It carries out the reaction a plastoquinone + NADPH + (n+1) H(+)(in) = a plastoquinol + NADP(+) + n H(+)(out). Functionally, NDH shuttles electrons from NAD(P)H:plastoquinone, via FMN and iron-sulfur (Fe-S) centers, to quinones in the photosynthetic chain and possibly in a chloroplast respiratory chain. The immediate electron acceptor for the enzyme in this species is believed to be plastoquinone. Couples the redox reaction to proton translocation, and thus conserves the redox energy in a proton gradient. This is NAD(P)H-quinone oxidoreductase subunit K, chloroplastic from Draba nemorosa (Woodland whitlowgrass).